The primary structure comprises 446 residues: Histidine--tRNA ligase (446 aa).

It belongs to the class-II aminoacyl-tRNA synthetase family. As to quaternary structure, homodimer.

The protein localises to the cytoplasm. The catalysed reaction is tRNA(His) + L-histidine + ATP = L-histidyl-tRNA(His) + AMP + diphosphate + H(+). The chain is Histidine--tRNA ligase from Burkholderia ambifaria (strain MC40-6).